The following is a 325-amino-acid chain: Aldo-keto reductase family 1 member A1 (325 aa).

Ala-2 carries the N-acetylalanine modification. Ser-4 is modified (phosphoserine). NADP(+) is bound by residues Gly-11–Gly-20, Thr-21, and Trp-22. Phosphoserine is present on Ser-38. Asp-45 is a binding site for NADP(+). Tyr-50 serves as the catalytic Proton donor. Lys-127 is modified (N6-acetyllysine; alternate). Position 127 is an N6-succinyllysine; alternate (Lys-127). Lys-145 carries the post-translational modification N6-succinyllysine. Positions 162, 163, 211, 213, 215, 216, 263, 264, 265, 266, 269, 272, and 273 each coordinate NADP(+). Ser-211 is subject to Phosphoserine.

It belongs to the aldo/keto reductase family. In terms of assembly, monomer. In terms of tissue distribution, widely expressed. Highly expressed in kidney, salivary gland and liver. Detected in trachea, stomach, brain, lung, prostate, placenta, mammary gland, small intestine and lung.

The protein resides in the cytoplasm. It is found in the cytosol. The protein localises to the apical cell membrane. The enzyme catalyses a primary alcohol + NADP(+) = an aldehyde + NADPH + H(+). It carries out the reaction allyl alcohol + NADP(+) = acrolein + NADPH + H(+). The catalysed reaction is glycerol + NADP(+) = D-glyceraldehyde + NADPH + H(+). It catalyses the reaction glycerol + NADP(+) = L-glyceraldehyde + NADPH + H(+). The enzyme catalyses hydroxyacetone + NADP(+) = methylglyoxal + NADPH + H(+). It carries out the reaction a 4-hydroxynonen-1-ol + NADP(+) = a 4-hydroxynonenal + NADPH + H(+). The catalysed reaction is 3-deoxyfructose + NADP(+) = 3-deoxyglucosone + NADPH + H(+). It catalyses the reaction L-gulonate + NADP(+) = aldehydo-D-glucuronate + NADPH + H(+). The enzyme catalyses L-gulono-1,4-lactone + NADP(+) = D-glucurono-3,6-lactone + NADPH + H(+). It carries out the reaction pyridine 3-methanol + NADP(+) = pyridine-3-carbaldehyde + NADPH + H(+). The catalysed reaction is S-nitroso-CoA + NADPH + H(+) = sulfinamide-CoA + NADP(+). It catalyses the reaction S-nitrosoglutathione + NADPH + H(+) = S-(hydroxysulfenamide)glutathione + NADP(+). Functionally, catalyzes the NADPH-dependent reduction of a wide variety of carbonyl-containing compounds to their corresponding alcohols. Displays enzymatic activity towards endogenous metabolites such as aromatic and aliphatic aldehydes, ketones, monosaccharides and bile acids, with a preference for negatively charged substrates, such as glucuronate and succinic semialdehyde. Functions as a detoxifiying enzyme by reducing a range of toxic aldehydes. Reduces methylglyoxal and 3-deoxyglucosone, which are present at elevated levels under hyperglycemic conditions and are cytotoxic. Involved also in the detoxification of lipid-derived aldehydes like acrolein. Plays a role in the activation of procarcinogens, such as polycyclic aromatic hydrocarbon trans-dihydrodiols, and in the metabolism of various xenobiotics and drugs, including the anthracyclines doxorubicin (DOX) and daunorubicin (DAUN). Also acts as an inhibitor of protein S-nitrosylation by mediating degradation of S-nitroso-coenzyme A (S-nitroso-CoA), a cofactor required to S-nitrosylate proteins. S-nitroso-CoA reductase activity is involved in reprogramming intermediary metabolism in renal proximal tubules, notably by inhibiting protein S-nitrosylation of isoform 2 of PKM (PKM2). Also acts as a S-nitroso-glutathione reductase by catalyzing the NADPH-dependent reduction of S-nitrosoglutathione. Displays no reductase activity towards retinoids. This Homo sapiens (Human) protein is Aldo-keto reductase family 1 member A1 (AKR1A1).